The chain runs to 189 residues: UPF0688 protein C1orf174 homolog (189 aa).

The interval 53–137 (QMAGDGGEAK…TTDPSVFFDE (85 aa)) is disordered. Composition is skewed to basic and acidic residues over residues 59–73 (GEAK…HGEV) and 93–103 (APGERRGKENS).

It belongs to the UPF0688 family.

The protein resides in the nucleus. The polypeptide is UPF0688 protein C1orf174 homolog (Danio rerio (Zebrafish)).